The chain runs to 320 residues: Malate dehydrogenase (320 aa).

NAD(+) is bound by residues 10–15 and Asp34; that span reads GSGMIG. Substrate-binding residues include Arg83 and Arg89. NAD(+) contacts are provided by residues Asn96 and 119 to 121; that span reads ITN. Residues Asn121 and Arg152 each coordinate substrate. Catalysis depends on His176, which acts as the Proton acceptor.

Belongs to the LDH/MDH superfamily. MDH type 3 family.

The enzyme catalyses (S)-malate + NAD(+) = oxaloacetate + NADH + H(+). In terms of biological role, catalyzes the reversible oxidation of malate to oxaloacetate. The protein is Malate dehydrogenase of Brucella abortus (strain S19).